The sequence spans 111 residues: MDIKSQTLYLNLSEAYKDPEVKANEFLSKLVVQCAGKLTASNSENSYIEVISLLSRGISSYYLSHKRIIPSSMLTIYTQIQKDIKNGNIDTEKLRKYEIAKGLMSVPYIYF.

In terms of biological role, could impart immunity to carnobacteriocin-B2 to naturally sensitive host strains. The protein is Putative carnobacteriocin-B2 immunity protein of Carnobacterium maltaromaticum (Carnobacterium piscicola).